The chain runs to 101 residues: Putative membrane protein insertion efficiency factor (101 aa).

It belongs to the UPF0161 family.

Its subcellular location is the cell membrane. Its function is as follows. Could be involved in insertion of integral membrane proteins into the membrane. In Lacticaseibacillus casei (strain BL23) (Lactobacillus casei), this protein is Putative membrane protein insertion efficiency factor.